The sequence spans 398 residues: 4-hydroxy-3-methylbut-2-enyl diphosphate reductase (398 aa).

C66 provides a ligand contact to [4Fe-4S] cluster. H96 provides a ligand contact to (2E)-4-hydroxy-3-methylbut-2-enyl diphosphate. Position 96 (H96) interacts with dimethylallyl diphosphate. H96 contributes to the isopentenyl diphosphate binding site. Position 157 (C157) interacts with [4Fe-4S] cluster. H185 contacts (2E)-4-hydroxy-3-methylbut-2-enyl diphosphate. H185 is a dimethylallyl diphosphate binding site. An isopentenyl diphosphate-binding site is contributed by H185. The Proton donor role is filled by E187. T250 provides a ligand contact to (2E)-4-hydroxy-3-methylbut-2-enyl diphosphate. C288 contacts [4Fe-4S] cluster. Positions 317, 318, 319, and 380 each coordinate (2E)-4-hydroxy-3-methylbut-2-enyl diphosphate. Dimethylallyl diphosphate contacts are provided by S317, S318, N319, and S380. Isopentenyl diphosphate contacts are provided by S317, S318, N319, and S380.

This sequence belongs to the IspH family. It depends on [4Fe-4S] cluster as a cofactor.

The catalysed reaction is isopentenyl diphosphate + 2 oxidized [2Fe-2S]-[ferredoxin] + H2O = (2E)-4-hydroxy-3-methylbut-2-enyl diphosphate + 2 reduced [2Fe-2S]-[ferredoxin] + 2 H(+). It catalyses the reaction dimethylallyl diphosphate + 2 oxidized [2Fe-2S]-[ferredoxin] + H2O = (2E)-4-hydroxy-3-methylbut-2-enyl diphosphate + 2 reduced [2Fe-2S]-[ferredoxin] + 2 H(+). It participates in isoprenoid biosynthesis; dimethylallyl diphosphate biosynthesis; dimethylallyl diphosphate from (2E)-4-hydroxy-3-methylbutenyl diphosphate: step 1/1. The protein operates within isoprenoid biosynthesis; isopentenyl diphosphate biosynthesis via DXP pathway; isopentenyl diphosphate from 1-deoxy-D-xylulose 5-phosphate: step 6/6. Functionally, catalyzes the conversion of 1-hydroxy-2-methyl-2-(E)-butenyl 4-diphosphate (HMBPP) into a mixture of isopentenyl diphosphate (IPP) and dimethylallyl diphosphate (DMAPP). Acts in the terminal step of the DOXP/MEP pathway for isoprenoid precursor biosynthesis. The protein is 4-hydroxy-3-methylbut-2-enyl diphosphate reductase of Prochlorococcus marinus (strain MIT 9301).